The sequence spans 406 residues: Acetate kinase (406 aa).

Position 7 (asparagine 7) interacts with Mg(2+). Residue lysine 14 participates in ATP binding. Substrate is bound at residue arginine 90. The Proton donor/acceptor role is filled by aspartate 147. Residues 207-211 (HLGNG), 283-285 (DMR), and 331-335 (GVGEN) contribute to the ATP site. Glutamate 385 serves as a coordination point for Mg(2+).

Belongs to the acetokinase family. As to quaternary structure, homodimer. Mg(2+) serves as cofactor. Requires Mn(2+) as cofactor.

It is found in the cytoplasm. The enzyme catalyses acetate + ATP = acetyl phosphate + ADP. The protein operates within metabolic intermediate biosynthesis; acetyl-CoA biosynthesis; acetyl-CoA from acetate: step 1/2. In terms of biological role, catalyzes the formation of acetyl phosphate from acetate and ATP. Can also catalyze the reverse reaction. In Fervidobacterium nodosum (strain ATCC 35602 / DSM 5306 / Rt17-B1), this protein is Acetate kinase.